The chain runs to 505 residues: Facilitated trehalose transporter Tret1 (505 aa).

Residues 1–46 lie on the Cytoplasmic side of the membrane; the sequence is MEMEIKDENLRNSVPFVRQLSTDSVKTKTEYDNEDGTPYKSTTQKL. Residues 47-67 form a helical membrane-spanning segment; that stretch reads FLWTQLLAAFAVSVGSMNVGF. The Extracellular portion of the chain corresponds to 68–91; that stretch reads SSGYTSPAVLTMNITLDITKEEIT. Asparagine 80 is a glycosylation site (N-linked (GlcNAc...) asparagine). The helical transmembrane segment at 92-112 threads the bilayer; that stretch reads WVGGLMPLAALVGGIVGGPLI. Topologically, residues 113-124 are cytoplasmic; it reads EYLGRKKTIMGT. Residues 125–145 traverse the membrane as a helical segment; it reads AVPFTIGWMLIANAINVVMVF. At 146–149 the chain is on the extracellular side; sequence AGRV. A helical membrane pass occupies residues 150 to 170; it reads ICGVCVGIVSLAFPVYIGETI. Residues 171–175 lie on the Cytoplasmic side of the membrane; that stretch reads QPEVR. A helical membrane pass occupies residues 176-196; it reads GALGLLPTAFGNTGILLAFLV. Topologically, residues 197 to 201 are extracellular; it reads GSYLD. A helical membrane pass occupies residues 202-222; sequence WSNLAFFGAAIPVPFFLLMIL. Topologically, residues 223 to 286 are cytoplasmic; it reads TPETPRWYVS…QLFSKRYLPA (64 aa). Residues 287–307 traverse the membrane as a helical segment; that stretch reads VMISLGLMLFQQLTGINAVIF. The Extracellular portion of the chain corresponds to 308–323; that stretch reads YAASIFQMSGSSVDEN. Residues 324-344 traverse the membrane as a helical segment; the sequence is LASIIIGVVNFISTFIATMLI. The Cytoplasmic portion of the chain corresponds to 345–350; that stretch reads DRLGRK. The helical transmembrane segment at 351–371 threads the bilayer; it reads VLLYISSVAMITTLLALGAYF. The Extracellular segment spans residues 372–390; that stretch reads YLKQNHIDVTAYGWLPLAC. Residues 391–411 form a helical membrane-spanning segment; sequence LVIYVLGFSIGFGPIPWLMLG. Residues 412-419 lie on the Cytoplasmic side of the membrane; that stretch reads EILPSKIR. Residues 420–437 form a helical membrane-spanning segment; it reads GTAASLATGFNWTCTFIV. Residues 438–451 lie on the Extracellular side of the membrane; that stretch reads TKTFQNIIDAIYMH. The helical transmembrane segment at 452-472 threads the bilayer; the sequence is GTLWLFAVICIGGLLFVIFFV. Over 473–505 the chain is Cytoplasmic; it reads PETKGKSLEEIEMKLTSGSRRVRNISKQPENIC.

Belongs to the major facilitator superfamily. Sugar transporter (TC 2.A.1.1) family. Trehalose transporter subfamily. Expressed in many larval tissues at a low level, moderate levels of expression are seen in testis and head and highest expression in muscle.

The protein resides in the cell membrane. High-capacity facilitative transporter for trehalose. Does not transport maltose, sucrose or lactose. Mediates the bidirectional transfer of trehalose. Responsible for the transport of trehalose synthesized in the fat body and the incorporation of trehalose into other tissues that require a carbon source, thereby regulating trehalose levels in the hemolymph. This is Facilitated trehalose transporter Tret1 from Bombyx mori (Silk moth).